The chain runs to 160 residues: Transcription elongation factor GreA (160 aa).

A coiled-coil region spans residues 1 to 72; it reads MAEKTYVMTL…QIQILETKIR (72 aa).

This sequence belongs to the GreA/GreB family.

Its function is as follows. Necessary for efficient RNA polymerase transcription elongation past template-encoded arresting sites. The arresting sites in DNA have the property of trapping a certain fraction of elongating RNA polymerases that pass through, resulting in locked ternary complexes. Cleavage of the nascent transcript by cleavage factors such as GreA or GreB allows the resumption of elongation from the new 3'terminus. GreA releases sequences of 2 to 3 nucleotides. This is Transcription elongation factor GreA from Streptococcus thermophilus (strain ATCC BAA-491 / LMD-9).